The sequence spans 93 residues: UPF0358 protein LMHCC_1561 (93 aa).

This sequence belongs to the UPF0358 family.

In Listeria monocytogenes serotype 4a (strain HCC23), this protein is UPF0358 protein LMHCC_1561.